Here is a 120-residue protein sequence, read N- to C-terminus: UPF0231 protein YacL (120 aa).

Belongs to the UPF0231 family.

This chain is UPF0231 protein YacL, found in Salmonella typhi.